The primary structure comprises 335 residues: 4-hydroxy-3-methylbut-2-enyl diphosphate reductase 2 (335 aa).

Cys-37 contacts [4Fe-4S] cluster. Residues His-66 and His-99 each coordinate (2E)-4-hydroxy-3-methylbut-2-enyl diphosphate. Dimethylallyl diphosphate is bound by residues His-66 and His-99. His-66 and His-99 together coordinate isopentenyl diphosphate. Cys-121 provides a ligand contact to [4Fe-4S] cluster. His-149 contributes to the (2E)-4-hydroxy-3-methylbut-2-enyl diphosphate binding site. Position 149 (His-149) interacts with dimethylallyl diphosphate. His-149 is a binding site for isopentenyl diphosphate. Glu-151 serves as the catalytic Proton donor. Position 189 (Thr-189) interacts with (2E)-4-hydroxy-3-methylbut-2-enyl diphosphate. Cys-219 lines the [4Fe-4S] cluster pocket. (2E)-4-hydroxy-3-methylbut-2-enyl diphosphate-binding residues include Ser-247, Ser-248, Asn-249, and Ser-292. Dimethylallyl diphosphate is bound by residues Ser-247, Ser-248, Asn-249, and Ser-292. Isopentenyl diphosphate contacts are provided by Ser-247, Ser-248, Asn-249, and Ser-292.

Belongs to the IspH family. [4Fe-4S] cluster serves as cofactor.

It catalyses the reaction isopentenyl diphosphate + 2 oxidized [2Fe-2S]-[ferredoxin] + H2O = (2E)-4-hydroxy-3-methylbut-2-enyl diphosphate + 2 reduced [2Fe-2S]-[ferredoxin] + 2 H(+). The enzyme catalyses dimethylallyl diphosphate + 2 oxidized [2Fe-2S]-[ferredoxin] + H2O = (2E)-4-hydroxy-3-methylbut-2-enyl diphosphate + 2 reduced [2Fe-2S]-[ferredoxin] + 2 H(+). Its pathway is isoprenoid biosynthesis; dimethylallyl diphosphate biosynthesis; dimethylallyl diphosphate from (2E)-4-hydroxy-3-methylbutenyl diphosphate: step 1/1. It participates in isoprenoid biosynthesis; isopentenyl diphosphate biosynthesis via DXP pathway; isopentenyl diphosphate from 1-deoxy-D-xylulose 5-phosphate: step 6/6. Its function is as follows. Catalyzes the conversion of 1-hydroxy-2-methyl-2-(E)-butenyl 4-diphosphate (HMBPP) into a mixture of isopentenyl diphosphate (IPP) and dimethylallyl diphosphate (DMAPP). Acts in the terminal step of the DOXP/MEP pathway for isoprenoid precursor biosynthesis. Has a higher activity compared with LytB2. Is essential for M.tuberculosis growth in vitro. The protein is 4-hydroxy-3-methylbut-2-enyl diphosphate reductase 2 of Mycobacterium tuberculosis (strain ATCC 25618 / H37Rv).